Here is a 145-residue protein sequence, read N- to C-terminus: Ribosomal RNA large subunit methyltransferase H (145 aa).

Residues Gly-94 and 113 to 118 (LSPLTF) each bind S-adenosyl-L-methionine.

Belongs to the RNA methyltransferase RlmH family. As to quaternary structure, homodimer.

The protein resides in the cytoplasm. It carries out the reaction pseudouridine(1915) in 23S rRNA + S-adenosyl-L-methionine = N(3)-methylpseudouridine(1915) in 23S rRNA + S-adenosyl-L-homocysteine + H(+). Specifically methylates the pseudouridine at position 1915 (m3Psi1915) in 23S rRNA. This is Ribosomal RNA large subunit methyltransferase H from Sorangium cellulosum (strain So ce56) (Polyangium cellulosum (strain So ce56)).